The sequence spans 1505 residues: Myosin-6 (1505 aa).

The Myosin N-terminal SH3-like domain maps to 8-57; sequence SVGSFVWVEDPDEAWIDGEVVQVNGDEIKVLCTSGKHVVTKISNAYPKDV. Residues 62-731 enclose the Myosin motor domain; the sequence is SGVDDMTRLA…QMADLDTRRT (670 aa). Residues 156–163 and 209–217 each bind ATP; these read GESGAGKT and NNNSSRFGK. 4 actin-binding regions span residues 495 to 529, 531 to 554, 589 to 612, and 612 to 634; these read LIEK…YQTF, THKR…AGDV, FPPM…KQQL, and LVSL…KPNN. IQ domains lie at 734–763, 757–786, 782–811, 805–834, 830–859, and 853–882; these read LGRS…SAKQ, LRNS…EAAA, REAA…AAVS, LYSA…TKAA, QTKA…AAIT, and LKKA…AARE. The stretch at 883–1048 forms a coiled coil; sequence TGALQAAKNK…AEKKIMHQQT (166 aa). The Dilute domain maps to 1148-1452; sequence DRLIQMIGSA…ISSMRTLMTE (305 aa).

This sequence belongs to the TRAFAC class myosin-kinesin ATPase superfamily. Myosin family. Plant myosin class XI subfamily. As to quaternary structure, homodimer. Interacts with RABC2A and RABD1. In terms of tissue distribution, expressed in flowers, leaves, roots and stems.

It is found in the cytoplasm. Myosin heavy chain that is required for the cell cycle-regulated transport of various organelles and proteins for their segregation. Functions by binding with its tail domain to receptor proteins on organelles and exerting force with its N-terminal motor domain against actin filaments, thereby transporting its cargo along polarized actin cables. Involved in the tip growth of root hair cells. Plays a major role in trafficking of Golgi stacks, mitochondria and peroxisomes during root hair development. Targets the peroxisome through an interaction with RABC2A. Required for development of pavement cells, trichomes, and stigmatic papillae. This Arabidopsis thaliana (Mouse-ear cress) protein is Myosin-6 (XI-2).